Reading from the N-terminus, the 206-residue chain is LexA repressor (206 aa).

A DNA-binding region (H-T-H motif) is located at residues 28–48; it reads VREIGEAVGLASSSTVHGHLA. Catalysis depends on for autocatalytic cleavage activity residues S128 and K166.

Belongs to the peptidase S24 family. In terms of assembly, homodimer.

The enzyme catalyses Hydrolysis of Ala-|-Gly bond in repressor LexA.. In terms of biological role, represses a number of genes involved in the response to DNA damage (SOS response), including recA and lexA. In the presence of single-stranded DNA, RecA interacts with LexA causing an autocatalytic cleavage which disrupts the DNA-binding part of LexA, leading to derepression of the SOS regulon and eventually DNA repair. This Bacillus pumilus (strain SAFR-032) protein is LexA repressor.